Here is a 252-residue protein sequence, read N- to C-terminus: Phosphosulfolactate synthase (252 aa).

Belongs to the phosphosulfolactate synthase family.

The catalysed reaction is (2R)-O-phospho-3-sulfolactate = phosphoenolpyruvate + sulfite + H(+). Catalyzes the addition of sulfite to phosphoenolpyruvate (PEP) to yield (2R)-phospho-3-sulfolactate (PSL). Is probably involved in the biosynthesis of L-sulfolactate, which is a major constituent of sporulating cells and mature spores. The polypeptide is Phosphosulfolactate synthase (yitD) (Bacillus subtilis (strain 168)).